Reading from the N-terminus, the 496-residue chain is L-arabinose isomerase (496 aa).

Mn(2+) contacts are provided by Glu-305, Glu-330, His-347, and His-446.

It belongs to the arabinose isomerase family. The cofactor is Mn(2+).

The catalysed reaction is beta-L-arabinopyranose = L-ribulose. Its pathway is carbohydrate degradation; L-arabinose degradation via L-ribulose; D-xylulose 5-phosphate from L-arabinose (bacterial route): step 1/3. Functionally, catalyzes the conversion of L-arabinose to L-ribulose. The protein is L-arabinose isomerase of Bacillus subtilis (strain 168).